The sequence spans 83 residues: Putative defensin-like protein 66 (83 aa).

The N-terminal stretch at 1-22 is a signal peptide; that stretch reads MGSSRLMITFIVVAMLAISSDL. 4 disulfides stabilise this stretch: C38–C82, C42–C65, C51–C80, and C55–C81.

It belongs to the DEFL family.

The protein resides in the secreted. This is Putative defensin-like protein 66 from Arabidopsis thaliana (Mouse-ear cress).